The following is a 145-amino-acid chain: uncharacterized protein (145 aa).

Residues 1-25 (MSENNENDGFNLDPDVKEELEETKS) are disordered. Residues 14-25 (PDVKEELEETKS) are compositionally biased toward basic and acidic residues.

This is an uncharacterized protein from His1 virus (isolate Australia/Victoria) (His1V).